A 498-amino-acid polypeptide reads, in one-letter code: ATP synthase subunit beta, chloroplastic (498 aa).

Residue 172 to 179 (GGAGVGKT) coordinates ATP.

This sequence belongs to the ATPase alpha/beta chains family. F-type ATPases have 2 components, CF(1) - the catalytic core - and CF(0) - the membrane proton channel. CF(1) has five subunits: alpha(3), beta(3), gamma(1), delta(1), epsilon(1). CF(0) has four main subunits: a(1), b(1), b'(1) and c(9-12).

It is found in the plastid. The protein resides in the chloroplast thylakoid membrane. The enzyme catalyses ATP + H2O + 4 H(+)(in) = ADP + phosphate + 5 H(+)(out). In terms of biological role, produces ATP from ADP in the presence of a proton gradient across the membrane. The catalytic sites are hosted primarily by the beta subunits. This chain is ATP synthase subunit beta, chloroplastic, found in Oryza nivara (Indian wild rice).